A 251-amino-acid chain; its full sequence is Malonyl-[acyl-carrier protein] O-methyltransferase (251 aa).

The protein belongs to the methyltransferase superfamily.

The enzyme catalyses malonyl-[ACP] + S-adenosyl-L-methionine = malonyl-[ACP] methyl ester + S-adenosyl-L-homocysteine. It participates in cofactor biosynthesis; biotin biosynthesis. Functionally, converts the free carboxyl group of a malonyl-thioester to its methyl ester by transfer of a methyl group from S-adenosyl-L-methionine (SAM). It allows to synthesize pimeloyl-ACP via the fatty acid synthetic pathway. The chain is Malonyl-[acyl-carrier protein] O-methyltransferase from Pseudescherichia vulneris (Escherichia vulneris).